The primary structure comprises 355 residues: MQVEVDLPNHSYHIKIEEGCFSEAGDWVSHLWQKQMITIITDSNVEILYGESLVNQLKKQGFTVHVFSFAAGEASKTLEVANRIYGFLAKHHMTRSDGIIALGGGVVGDLAAFVASTYMRGIHFLQIPTSLTAQVDSSIGGKTGVNTSFAKNMVGTFAQPDGVLIDPVTLKTLGNRELVEGMGEVIKYGLIDDIKLWHILEEMDGSIDSILDNALAIIYHSCQVKRKHVLADQYDKGLRMHLNFGHTIGHAIEVHAGYGEIMHGEAVAIGMIQLSRVAERKNLMPRGISQDIYNMCLKFGLPVHYAEWDKDVLFDILSHDKKASGQFIKIVILPQLGSATVHQIPLEEMRDYLEK.

Residues 105-109 (GVVGD), 129-130 (TS), Lys-142, Lys-151, and 169-172 (TLKT) each bind NAD(+). Zn(2+)-binding residues include Glu-184, His-246, and His-263.

It belongs to the sugar phosphate cyclases superfamily. Dehydroquinate synthase family. Co(2+) serves as cofactor. The cofactor is Zn(2+). NAD(+) is required as a cofactor.

Its subcellular location is the cytoplasm. The enzyme catalyses 7-phospho-2-dehydro-3-deoxy-D-arabino-heptonate = 3-dehydroquinate + phosphate. It participates in metabolic intermediate biosynthesis; chorismate biosynthesis; chorismate from D-erythrose 4-phosphate and phosphoenolpyruvate: step 2/7. Catalyzes the conversion of 3-deoxy-D-arabino-heptulosonate 7-phosphate (DAHP) to dehydroquinate (DHQ). This is 3-dehydroquinate synthase from Streptococcus agalactiae serotype Ia (strain ATCC 27591 / A909 / CDC SS700).